Here is a 123-residue protein sequence, read N- to C-terminus: Large ribosomal subunit protein uL18 (123 aa).

This sequence belongs to the universal ribosomal protein uL18 family. In terms of assembly, part of the 50S ribosomal subunit; part of the 5S rRNA/L5/L18/L25 subcomplex. Contacts the 5S and 23S rRNAs.

Its function is as follows. This is one of the proteins that bind and probably mediate the attachment of the 5S RNA into the large ribosomal subunit, where it forms part of the central protuberance. This chain is Large ribosomal subunit protein uL18, found in Chlamydia abortus (strain DSM 27085 / S26/3) (Chlamydophila abortus).